The chain runs to 504 residues: 2-methylcitrate dehydratase 2 (504 aa).

The protein belongs to the PrpD family. As to quaternary structure, monomer.

It catalyses the reaction (2S,3S)-2-methylcitrate = 2-methyl-cis-aconitate + H2O. It carries out the reaction citrate = D-threo-isocitrate. Its pathway is organic acid metabolism; propanoate degradation. It participates in carbohydrate metabolism; tricarboxylic acid cycle; isocitrate from oxaloacetate: step 1/2. Functionally, involved in the catabolism of short chain fatty acids (SCFA) via the 2-methylcitrate cycle I (propionate degradation route). Catalyzes the dehydration of 2-methylcitrate (2-MC) to yield the cis isomer 2-methyl-aconitate. Could also catalyze the dehydration of citrate and the hydration of cis-aconitate. The polypeptide is 2-methylcitrate dehydratase 2 (prpD2) (Corynebacterium glutamicum (strain ATCC 13032 / DSM 20300 / JCM 1318 / BCRC 11384 / CCUG 27702 / LMG 3730 / NBRC 12168 / NCIMB 10025 / NRRL B-2784 / 534)).